A 2167-amino-acid chain; its full sequence is SH3 and multiple ankyrin repeat domains protein 1 (2167 aa).

The segment at methionine 1–serine 63 is disordered. A compositionally biased stretch (low complexity) spans serine 17–glycine 32. Positions proline 33–alanine 47 are enriched in gly residues. Arginine 43 is modified (omega-N-methylarginine). At tyrosine 186 the chain carries Phosphotyrosine. ANK repeat units follow at residues serine 212 to phenylalanine 242, aspartate 246 to tyrosine 275, arginine 279 to isoleucine 309, asparagine 313 to alanine 342, serine 346 to valine 375, and asparagine 379 to valine 407. 2 disordered regions span residues serine 413–proline 432 and proline 454–arginine 546. Low complexity predominate over residues proline 454–threonine 479. Residues proline 527–glycine 542 are compositionally biased toward gly residues. Serine 540 bears the Phosphoserine mark. Arginine 544 carries the omega-N-methylarginine modification. Residues valine 554–asparagine 613 form the SH3 domain. Residues threonine 663–threonine 757 enclose the PDZ domain. Serine 671 and serine 791 each carry phosphoserine. The disordered stretch occupies residues isoleucine 841–leucine 894. At serine 898 the chain carries Phosphoserine. Disordered stretches follow at residues serine 917–threonine 1233 and arginine 1245–lysine 1290. Residues isoleucine 928 to proline 947 show a composition bias toward pro residues. Omega-N-methylarginine is present on arginine 958. The segment covering proline 969–glycine 980 has biased composition (low complexity). Residues alanine 1004–proline 1028 are compositionally biased toward basic residues. An Omega-N-methylarginine modification is found at arginine 1059. The span at serine 1064–alanine 1089 shows a compositional bias: low complexity. Arginine 1098 and arginine 1109 each carry omega-N-methylarginine. 2 stretches are compositionally biased toward low complexity: residues serine 1132–arginine 1146 and serine 1171–threonine 1184. A compositionally biased stretch (pro residues) spans serine 1203 to proline 1224. The span at arginine 1245–arginine 1256 shows a compositional bias: basic and acidic residues. Arginine 1257 is modified (asymmetric dimethylarginine). The residue at position 1291 (serine 1291) is a Phosphoserine. Disordered regions lie at residues glycine 1308–serine 1331, leucine 1361–leucine 1417, arginine 1429–alanine 1458, phenylalanine 1500–alanine 1725, glycine 1740–serine 1790, valine 1828–alanine 1866, proline 1898–histidine 1988, and arginine 2002–leucine 2029. Positions alanine 1363–serine 1372 are enriched in basic and acidic residues. The segment covering proline 1378–threonine 1395 has biased composition (pro residues). The span at leucine 1396 to histidine 1408 shows a compositional bias: basic residues. At arginine 1429 the chain carries Omega-N-methylarginine. A Phosphoserine modification is found at serine 1442. The segment covering arginine 1530–arginine 1541 has biased composition (low complexity). Residues proline 1589 to alanine 1615 show a composition bias toward pro residues. Positions aspartate 1624–threonine 1641 are enriched in polar residues. The segment covering proline 1648–glycine 1676 has biased composition (pro residues). Basic and acidic residues predominate over residues valine 1684–leucine 1694. Over residues glutamate 1695–alanine 1708 the composition is skewed to low complexity. Gly residues predominate over residues glutamate 1709–valine 1724. Positions proline 1850–leucine 1861 are enriched in pro residues. At arginine 1901 the chain carries Omega-N-methylarginine. 3 stretches are compositionally biased toward low complexity: residues serine 1934 to serine 1945, threonine 1960 to serine 1985, and arginine 2002 to alanine 2012. An omega-N-methylarginine mark is found at arginine 2022, arginine 2042, and arginine 2080. Residues tryptophan 2104–arginine 2167 enclose the SAM domain.

Belongs to the SHANK family. May homomultimerize via its SAM domain. Interacts with the C-terminus of SSTR2 via the PDZ domain. Interacts with SHARPIN, SPTAN1, HOMER1 and DLGAP1/GKAP. Part of a complex with DLG4/PSD-95 and DLGAP1/GKAP. Interacts with BAIAP2. Interacts with IGSF9. Interacts with HOMER1 and HOMER3. In terms of tissue distribution, in brain, highly expressed in cortex, hippocampus and cerebellum.

The protein localises to the cytoplasm. It is found in the synapse. The protein resides in the postsynaptic density. In terms of biological role, seems to be an adapter protein in the postsynaptic density (PSD) of excitatory synapses that interconnects receptors of the postsynaptic membrane including NMDA-type and metabotropic glutamate receptors, and the actin-based cytoskeleton. Plays a role in the structural and functional organization of the dendritic spine and synaptic junction. Overexpression promotes maturation of dendritic spines and the enlargement of spine heads via its ability to recruit Homer to postsynaptic sites, and enhances presynaptic function. This is SH3 and multiple ankyrin repeat domains protein 1 (Shank1) from Mus musculus (Mouse).